Reading from the N-terminus, the 99-residue chain is Large ribosomal subunit protein uL23 (99 aa).

This sequence belongs to the universal ribosomal protein uL23 family. As to quaternary structure, part of the 50S ribosomal subunit. Contacts protein L29, and trigger factor when it is bound to the ribosome.

One of the early assembly proteins it binds 23S rRNA. One of the proteins that surrounds the polypeptide exit tunnel on the outside of the ribosome. Forms the main docking site for trigger factor binding to the ribosome. In Pseudomonas fluorescens (strain SBW25), this protein is Large ribosomal subunit protein uL23.